The sequence spans 291 residues: N-acetylmannosamine kinase (291 aa).

ATP-binding positions include 5 to 12 (AIDIGGTK) and 132 to 139 (GVGGGVVS). Zn(2+) contacts are provided by His-156, Cys-166, Cys-168, and Cys-173.

The protein belongs to the ROK (NagC/XylR) family. NanK subfamily. Homodimer.

It carries out the reaction an N-acyl-D-mannosamine + ATP = an N-acyl-D-mannosamine 6-phosphate + ADP + H(+). It functions in the pathway amino-sugar metabolism; N-acetylneuraminate degradation; D-fructose 6-phosphate from N-acetylneuraminate: step 2/5. Functionally, catalyzes the phosphorylation of N-acetylmannosamine (ManNAc) to ManNAc-6-P. The protein is N-acetylmannosamine kinase of Shigella flexneri serotype 5b (strain 8401).